Here is a 245-residue protein sequence, read N- to C-terminus: ATP synthase subunit a (245 aa).

7 consecutive transmembrane segments (helical) span residues 5–25 (LWFT…MMSV), 37–57 (ISNY…FFIA), 99–119 (YIVT…IPGF), 125–145 (FPSV…VHGL), 157–177 (FLGP…CSHF), 187–209 (LYAN…PLGF), and 221–241 (SLIQ…EATA).

The protein belongs to the ATPase A chain family. As to quaternary structure, F-type ATPases have 2 components, CF(1) - the catalytic core - and CF(0) - the membrane proton channel. CF(1) has five subunits: alpha(3), beta(3), gamma(1), delta(1), epsilon(1). CF(0) has three main subunits: a(1), b(2) and c(9-12). The alpha and beta chains form an alternating ring which encloses part of the gamma chain. CF(1) is attached to CF(0) by a central stalk formed by the gamma and epsilon chains, while a peripheral stalk is formed by the delta and b chains.

The protein localises to the cell inner membrane. Its function is as follows. Key component of the proton channel; it plays a direct role in the translocation of protons across the membrane. The chain is ATP synthase subunit a from Koribacter versatilis (strain Ellin345).